The sequence spans 37 residues: GENEPPKKKAPDGCFGHKIDRIGSHSGLGCNKFKPGH.

An intrachain disulfide couples Cys-14 to Cys-30.

Expressed by the venom gland.

The protein resides in the secreted. In terms of biological role, increases urine flow and decreases blood pressure when administered to rats by intravenous injection. Inhibits thrombin-induced platelet aggregation. Stimulates cGMP production via the natriuretic peptide receptor-A (NPR1). The sequence is that of Natriuretic peptide PNP from Pseudocerastes persicus (Persian horned viper).